The primary structure comprises 481 residues: Sterol 14-alpha demethylase (481 aa).

Residues 1 to 21 form a helical membrane-spanning segment; it reads MFIEAIVLALTALILYSVYSV. Residue C422 participates in heme binding.

Belongs to the cytochrome P450 family. Heme serves as cofactor.

It localises to the membrane. The catalysed reaction is a 14alpha-methyl steroid + 3 reduced [NADPH--hemoprotein reductase] + 3 O2 = a Delta(14) steroid + formate + 3 oxidized [NADPH--hemoprotein reductase] + 4 H2O + 4 H(+). Its pathway is steroid biosynthesis; zymosterol biosynthesis; zymosterol from lanosterol: step 1/6. Its function is as follows. Catalyzes C14-demethylation of lanosterol which is critical for ergosterol biosynthesis. It transforms lanosterol into 4,4'-dimethyl cholesta-8,14,24-triene-3-beta-ol. Favors C4 dimethylated substrates, the substrate preference order is 24-methylenedihydrolanosterol &gt; 24,25-dihydrolanosterol &gt; lanosterol &gt; obtusifoliol &gt; norlanosterol. The polypeptide is Sterol 14-alpha demethylase (Trypanosoma cruzi (strain CL Brener)).